A 180-amino-acid polypeptide reads, in one-letter code: Translation initiation factor IF-3 (180 aa).

It belongs to the IF-3 family. As to quaternary structure, monomer.

It is found in the cytoplasm. Its function is as follows. IF-3 binds to the 30S ribosomal subunit and shifts the equilibrium between 70S ribosomes and their 50S and 30S subunits in favor of the free subunits, thus enhancing the availability of 30S subunits on which protein synthesis initiation begins. The chain is Translation initiation factor IF-3 from Salmonella paratyphi A (strain ATCC 9150 / SARB42).